Consider the following 356-residue polypeptide: Heparan sulfate 2-O-sulfotransferase 1 (356 aa).

The Cytoplasmic segment spans residues 1 to 11; sequence MGLLRIMMPPK. A helical; Signal-anchor for type II membrane protein membrane pass occupies residues 12–28; the sequence is LQLLAVVAFAVAMLFLE. The stretch at 24-51 forms a coiled coil; that stretch reads MLFLENQIQKLEESRAKLERAIARHEVR. Residues 29–356 are Lumenal-facing; sequence NQIQKLEESR…FYEKIYPKSN (328 aa). Adenosine 3',5'-bisphosphate contacts are provided by Lys-83, Thr-84, Ala-85, Ser-86, Thr-87, and Ser-88. N-linked (GlcNAc...) asparagine glycans are attached at residues Asn-108 and Asn-127. Residues His-140 and His-142 contribute to the active site. Residues Arg-164 and Ser-172 each coordinate adenosine 3',5'-bisphosphate. 2 disulfides stabilise this stretch: Cys-201–Cys-209 and Cys-222–Cys-228. Residues Tyr-279, Ser-285, Thr-290, and Lys-293 each coordinate adenosine 3',5'-bisphosphate.

Belongs to the sulfotransferase 3 family. In terms of assembly, homotrimer. Interacts with the C5-epimerase GLCE. Post-translationally, N-glycosylated. In terms of tissue distribution, widely expressed. Expressed at higher level in lung and brain. Weakly expressed in spleen.

Its subcellular location is the golgi apparatus membrane. Its function is as follows. Catalyzes the transfer of a sulfo group from 3'-phospho-5'-adenylyl sulfate (PAPS) to the 2-OH position of iduronic acid (IdoA) or glucuronic acid (GlcA) within the heparan sulfate (HS) chain and participates in HS biosynthesis. Required for metanephric development of kidney formation, suggesting that 2-O-sulfation within HS is essential for signaling between ureteric bud and metanephric mesenchyme. The polypeptide is Heparan sulfate 2-O-sulfotransferase 1 (Mus musculus (Mouse)).